A 263-amino-acid chain; its full sequence is Endonuclease 8 (263 aa).

Proline 2 (schiff-base intermediate with DNA) is an active-site residue. The Proton donor role is filled by glutamate 3. Lysine 53 serves as the catalytic Proton donor; for beta-elimination activity. DNA-binding residues include glutamine 70, arginine 125, and asparagine 169. An FPG-type zinc finger spans residues 229-263 (KVFHRDGELCERCGGIIEKTTLSSRPFYWCPGCQH). Arginine 253 (proton donor; for delta-elimination activity) is an active-site residue.

The protein belongs to the FPG family. The cofactor is Zn(2+).

It catalyses the reaction 2'-deoxyribonucleotide-(2'-deoxyribose 5'-phosphate)-2'-deoxyribonucleotide-DNA = a 3'-end 2'-deoxyribonucleotide-(2,3-dehydro-2,3-deoxyribose 5'-phosphate)-DNA + a 5'-end 5'-phospho-2'-deoxyribonucleoside-DNA + H(+). Its function is as follows. Involved in base excision repair of DNA damaged by oxidation or by mutagenic agents. Acts as a DNA glycosylase that recognizes and removes damaged bases. Has a preference for oxidized pyrimidines, such as thymine glycol, 5,6-dihydrouracil and 5,6-dihydrothymine. Has AP (apurinic/apyrimidinic) lyase activity and introduces nicks in the DNA strand. Cleaves the DNA backbone by beta-delta elimination to generate a single-strand break at the site of the removed base with both 3'- and 5'-phosphates. This is Endonuclease 8 from Escherichia coli (strain SE11).